The chain runs to 1725 residues: Latrophilin Cirl (1725 aa).

Residues 1–757 (MALNELGNCA…LFTMFDGNMR (757 aa)) lie on the Extracellular side of the membrane. The SUEL-type lectin domain maps to 18–107 (ACEGKQLTIE…KYLEAHYQCI (90 aa)). N-linked (GlcNAc...) asparagine glycosylation is present at Asn-135. Positions 164-284 (AVQPTHSTPS…SAANNSVNIG (121 aa)) are disordered. Low complexity-rich tracts occupy residues 167 to 176 (PTHSTPSSST) and 224 to 236 (SSSSSSNSGSAGN). Asn-236, Asn-278, Asn-326, Asn-388, Asn-645, Asn-693, and Asn-720 each carry an N-linked (GlcNAc...) asparagine glycan. Over residues 259–282 (LLTTKSSPNRTPGTTASAANNSVN) the composition is skewed to polar residues. Residues 361 to 390 (DDEYDDDLPAASSTTPQPSNNGGDCVHNSS) form a disordered region. The segment covering 371–390 (ASSTTPQPSNNGGDCVHNSS) has biased composition (polar residues). Residues 551-744 (RNVVQKVKNI…AILMDVVDEH (194 aa)) enclose the GAIN-B domain. 2 disulfide bridges follow: Cys-699-Cys-726 and Cys-714-Cys-728. The segment at 699 to 744 (CVFWNYIDHAWSANGCSLESTNRTHSVCSCNHLTNFAILMDVVDEH) is GPS. Residues 758 to 778 (IFIYISVAICVVFIIIALLTL) traverse the membrane as a helical segment. Residues 779–791 (KLFNGVFVKSART) lie on the Cytoplasmic side of the membrane. The chain crosses the membrane as a helical span at residues 792 to 812 (SIYSSIYICLLAIELLFLLGI). Residues 813 to 818 (EQTETS) are Extracellular-facing. A helical transmembrane segment spans residues 819–839 (IFCGFITVFLHCAILSGTAWF). Residues 840-865 (CYEAFHSYSTLTSDELLLEVDQTPKV) are Cytoplasmic-facing. A helical transmembrane segment spans residues 866-886 (NCYYLLSYGLSLSVVAISLVI). The Extracellular segment spans residues 887–910 (DPSTYTQNDYCVLMEANALFYSTF). A helical transmembrane segment spans residues 911–931 (VAPVLIFFVAAITYTFLSWII). At 932 to 958 (MRRKSRTALKTKEHTRLANVRFDIRCS) the chain is on the cytoplasmic side. A helical membrane pass occupies residues 959–979 (FVFLLLLSVVWCCAYFYLRGA). Topologically, residues 980–986 (KLDEDGA) are extracellular. Residues 987–1007 (PIYGYCFICFNTLLGIYIFVF) traverse the membrane as a helical segment. Residues 1008–1725 (HCIQNEKIRR…VRCYLEPLAK (718 aa)) lie on the Cytoplasmic side of the membrane. The segment at 1056-1088 (TANQSAGTLSKSKSKLPLGAGDEARDGDAQQQQ) is disordered. Ser-1153 is subject to Phosphoserine. Disordered regions lie at residues 1236–1263 (HNNQHGKKKRGGGAGAVPASPSGSLHSR), 1309–1337 (QQLQQQQLRQQRQQQQQQLSSDEEQAEQH), 1472–1555 (GGGS…SDER), and 1636–1705 (LFGH…QARH). Residues 1237–1246 (NNQHGKKKRG) are compositionally biased toward basic residues. Ser-1255 and Ser-1262 each carry phosphoserine. The span at 1309 to 1327 (QQLQQQQLRQQRQQQQQQL) shows a compositional bias: low complexity. Phosphoserine is present on residues Ser-1328 and Ser-1329. Low complexity predominate over residues 1478–1496 (GGSVTSRSQQQQQQQLKQK). Composition is skewed to acidic residues over residues 1505 to 1522 (DDDDDDDDDDDEYDDEVT) and 1532 to 1543 (CDDEDNESDIDD). A compositionally biased stretch (polar residues) spans 1651 to 1666 (QTPAQKRQQLQKLSPQ). The segment covering 1667–1683 (STTSSSSHTSHSNPQHA) has biased composition (low complexity). Basic residues predominate over residues 1684–1693 (PAHHLQHHHT). The segment covering 1694-1705 (QQQQQQQQQARH) has biased composition (low complexity).

The protein belongs to the G-protein coupled receptor 2 family. LN-TM7 subfamily. In terms of assembly, forms a heterodimer, consisting of a large extracellular region non-covalently linked to a seven-transmembrane moiety. Proteolytically cleaved into 2 subunits, an extracellular subunit and a seven-transmembrane subunit.

The protein resides in the cell membrane. The sequence is that of Latrophilin Cirl from Drosophila mojavensis (Fruit fly).